The sequence spans 339 residues: tRNA pseudouridine synthase D (339 aa).

The active-site Nucleophile is Asp80. A TRUD domain is found at 155–311; the sequence is GFPNYFTEQR…AKGFSWAFEP (157 aa).

Belongs to the pseudouridine synthase TruD family.

It catalyses the reaction uridine(13) in tRNA = pseudouridine(13) in tRNA. Responsible for synthesis of pseudouridine from uracil-13 in transfer RNAs. The polypeptide is tRNA pseudouridine synthase D (Haemophilus influenzae (strain 86-028NP)).